The following is a 193-amino-acid chain: Peptidyl-tRNA hydrolase (193 aa).

A tRNA-binding site is contributed by Y16. Catalysis depends on H21, which acts as the Proton acceptor. TRNA is bound by residues F67, N69, and N115.

The protein belongs to the PTH family. Monomer.

The protein localises to the cytoplasm. The enzyme catalyses an N-acyl-L-alpha-aminoacyl-tRNA + H2O = an N-acyl-L-amino acid + a tRNA + H(+). Its function is as follows. Hydrolyzes ribosome-free peptidyl-tRNAs (with 1 or more amino acids incorporated), which drop off the ribosome during protein synthesis, or as a result of ribosome stalling. Catalyzes the release of premature peptidyl moieties from peptidyl-tRNA molecules trapped in stalled 50S ribosomal subunits, and thus maintains levels of free tRNAs and 50S ribosomes. The sequence is that of Peptidyl-tRNA hydrolase from Vesicomyosocius okutanii subsp. Calyptogena okutanii (strain HA).